Reading from the N-terminus, the 300-residue chain is uncharacterized protein (300 aa).

One can recognise an HTH lysR-type domain in the interval phenylalanine 10–threonine 67. Residues isoleucine 27–glutamine 46 constitute a DNA-binding region (H-T-H motif).

The protein belongs to the LysR transcriptional regulatory family.

This is an uncharacterized protein from Escherichia coli (strain K12).